The chain runs to 762 residues: MRLWKAVVVTLAFVSTDVGVTTAIYAFSHLDRSLLEDIRHFNIFDSVLDLWAACLYRSCLLLGATIGVAKNSALGPRRLRASWLVITLVCLFVGIYAMAKLLLFSEVRRPIRDPWFWALFVWTYISLAASFLLWGLLATVRPDAEALEPGNEGFHGEGGAPAEQASGATLQKLLSYTKPDVAFLVAASFFLIVAALGETFLPYYTGRAIDSIVIQKSMDQFTTAVVVVCLLAIGSSLAAGIRGGIFTLVFARLNIRLRNCLFRSLVSQETSFFDENRTGDLISRLTSDTTMVSDLVSQNINIFLRNTVKVTGVVVFMFSLSWQLSLVTFMGFPIIMMVSNIYGKYYKRLSKEVQSALARASTTAEETISAMKTVRSFANEEEEAEVFLRKLQQVYKLNRKEAAAYMSYVWGSGLTLLVVQVSILYYGGHLVISGQMSSGNLIAFIIYEFVLGDCMESVGSVYSGLMQGVGAAEKVFEFIDRQPTMVHDGSLAPDHLEGRVDFENVTFTYRTRPHTQVLQNVSFSLSPGKVTALVGPSGSGKSSCVNILENFYPLQGGRVLLDGKPIGAYDHKYLHRVISLVSQEPVLFARSITDNISYGLPTVPFEMVVEAAQKANAHGFIMELQDGYSTETGEKGAQLSGGQKQRVAMARALVRNPPVLILDEATSALDAESEYLIQQAIHGNLQRHTVLIIAHRLSTVERAHLIVVLDKGRVVQQGTHQQLLAQGGLYAKLVQRQMLGLEHPLDYTASHKEPPSNTEHKA.

The next 8 membrane-spanning stretches (helical) occupy residues 7–27, 47–67, 84–104, 116–136, 181–201, 221–241, 315–335, and 412–432; these read VVVTLAFVSTDVGVTTAIYAF, VLDLWAACLYRSCLLLGATIG, LVITLVCLFVGIYAMAKLLLF, FWALFVWTYISLAASFLLWGL, VAFLVAASFFLIVAALGETFL, FTTAVVVVCLLAIGSSLAAGI, VFMFSLSWQLSLVTFMGFPII, and SGLTLLVVQVSILYYGGHLVI. The 284-residue stretch at 184–467 folds into the ABC transmembrane type-1 domain; the sequence is LVAASFFLIV…VGSVYSGLMQ (284 aa). Positions 500–736 constitute an ABC transporter domain; that stretch reads VDFENVTFTY…GGLYAKLVQR (237 aa). 535 to 542 is a binding site for ATP; it reads GPSGSGKS.

It belongs to the ABC transporter superfamily. ABCB family. MHC peptide exporter (TC 3.A.1.209) subfamily. Homodimer. Interacts (via TMD0 region) with LAMP1; this interaction strongly stabilizes ABCB9 and protects ABCB9 against lysosomal degradation. Interacts (via TMD0 region) with LAMP2 (isoform LAMP-2B). Interacts (via TMD0) with YIF1B; this interaction allows (but is not essential) the ER-to-Golgi trafficking and strongly depends on a salt bridge within TMD0. Highly expressed in testis, particularly in the Sertoli cells of the seminiferous tubules, and at moderate levels in brain and spinal cord.

It is found in the lysosome membrane. It catalyses the reaction a [oligopeptide](in) + ATP + H2O = a [oligopeptide](out) + ADP + phosphate + H(+). ATP-dependent low-affinity peptide transporter which translocates a broad spectrum of peptides from the cytosol to the lysosomal lumen for degradation. Displays a broad peptide length specificity from 6-mer up to at least 59-mer peptides with an optimum of 23-mers. Binds and transports smaller and larger peptides with the same affinity. Favors positively charged, aromatic or hydrophobic residues in the N- and C-terminal positions whereas negatively charged residues as well as asparagine and methionine are not favored. The chain is ABC-type oligopeptide transporter ABCB9 from Mus musculus (Mouse).